A 64-amino-acid chain; its full sequence is Large ribosomal subunit protein bL35 (64 aa).

The protein belongs to the bacterial ribosomal protein bL35 family.

The sequence is that of Large ribosomal subunit protein bL35 from Levilactobacillus brevis (strain ATCC 367 / BCRC 12310 / CIP 105137 / JCM 1170 / LMG 11437 / NCIMB 947 / NCTC 947) (Lactobacillus brevis).